We begin with the raw amino-acid sequence, 249 residues long: 1-(5-phosphoribosyl)-5-[(5-phosphoribosylamino)methylideneamino] imidazole-4-carboxamide isomerase (249 aa).

Aspartate 8 acts as the Proton acceptor in catalysis. Aspartate 129 acts as the Proton donor in catalysis.

It belongs to the HisA/HisF family.

Its subcellular location is the cytoplasm. It catalyses the reaction 1-(5-phospho-beta-D-ribosyl)-5-[(5-phospho-beta-D-ribosylamino)methylideneamino]imidazole-4-carboxamide = 5-[(5-phospho-1-deoxy-D-ribulos-1-ylimino)methylamino]-1-(5-phospho-beta-D-ribosyl)imidazole-4-carboxamide. It functions in the pathway amino-acid biosynthesis; L-histidine biosynthesis; L-histidine from 5-phospho-alpha-D-ribose 1-diphosphate: step 4/9. The sequence is that of 1-(5-phosphoribosyl)-5-[(5-phosphoribosylamino)methylideneamino] imidazole-4-carboxamide isomerase from Magnetococcus marinus (strain ATCC BAA-1437 / JCM 17883 / MC-1).